Here is a 302-residue protein sequence, read N- to C-terminus: Protein ECM11 (302 aa).

Disordered stretches follow at residues 1–67 and 162–187; these read MTVI…TDKQ and SLNG…GSYQ. Polar residues predominate over residues 35-46; sequence NKPPSSINSRSG. A compositionally biased stretch (basic and acidic residues) spans 56–67; the sequence is APEKKINNTDKQ. Positions 162–171 are enriched in polar residues; it reads SLNGENTSSP.

As to quaternary structure, interacts with CDC6.

It localises to the nucleus. In terms of biological role, may be involved in cell wall organization and biogenesis. The chain is Protein ECM11 (ECM11) from Saccharomyces cerevisiae (strain ATCC 204508 / S288c) (Baker's yeast).